A 204-amino-acid chain; its full sequence is CASP-like protein 2U1 (204 aa).

At 1 to 36 (MGVLGGDAHVPIGSQVSPGSVVVTNNESFGHRKLLK) the chain is on the cytoplasmic side. A helical transmembrane segment spans residues 37–57 (GVDFLVRIKAFAFCLAVIVLL). At 58–84 (KNNVQTTVIAPGIVLQAKYNNTKAPVS) the chain is on the extracellular side. The N-linked (GlcNAc...) asparagine glycan is linked to asparagine 77. The chain crosses the membrane as a helical span at residues 85–105 (LLVLASICCGYAFLQAVVSLL). Residues 106–117 (SFIRDKRVLNNT) are Cytoplasmic-facing. The chain crosses the membrane as a helical span at residues 118 to 138 (VLAWLTFLLDQVLTYLLLGSA). Topologically, residues 139–170 (AATAEAAYIAKRGEDKVQWKAVCGPFKRFCDH) are extracellular. Residues 171–191 (FAATVFLSFIAVIAFAVSAAI) form a helical membrane-spanning segment. At 192–204 (SAYYLFRRSKGFK) the chain is on the cytoplasmic side.

It belongs to the Casparian strip membrane proteins (CASP) family. As to quaternary structure, homodimer and heterodimers.

It localises to the cell membrane. In Selaginella moellendorffii (Spikemoss), this protein is CASP-like protein 2U1.